The chain runs to 64 residues: Probable tautomerase lp_1712 (64 aa).

Residue Pro-2 is the Proton acceptor; via imino nitrogen of the active site.

This sequence belongs to the 4-oxalocrotonate tautomerase family.

The chain is Probable tautomerase lp_1712 from Lactiplantibacillus plantarum (strain ATCC BAA-793 / NCIMB 8826 / WCFS1) (Lactobacillus plantarum).